The sequence spans 392 residues: Retrovirus-related Pol polyprotein from type-1 retrotransposable element R1 4 (392 aa).

A Reverse transcriptase domain is found at 1-230 (PFADDLAVLV…GGVVIRRRPE (230 aa)). The interval 231–392 (GLKENYNRVL…DEGLSSESEE (162 aa)) is nucleic acid-binding endonuclease.

It carries out the reaction DNA(n) + a 2'-deoxyribonucleoside 5'-triphosphate = DNA(n+1) + diphosphate. The protein is Retrovirus-related Pol polyprotein from type-1 retrotransposable element R1 4 of Nasonia vitripennis (Parasitic wasp).